Here is a 92-residue protein sequence, read N- to C-terminus: Small ribosomal subunit protein bS16 (92 aa).

It belongs to the bacterial ribosomal protein bS16 family.

The sequence is that of Small ribosomal subunit protein bS16 from Staphylococcus carnosus (strain TM300).